The chain runs to 450 residues: Glucose-6-phosphate isomerase (450 aa).

Residue Glu-291 is the Proton donor of the active site. Residues His-312 and Lys-426 contribute to the active site.

It belongs to the GPI family.

It localises to the cytoplasm. It catalyses the reaction alpha-D-glucose 6-phosphate = beta-D-fructose 6-phosphate. It participates in carbohydrate biosynthesis; gluconeogenesis. The protein operates within carbohydrate degradation; glycolysis; D-glyceraldehyde 3-phosphate and glycerone phosphate from D-glucose: step 2/4. In terms of biological role, catalyzes the reversible isomerization of glucose-6-phosphate to fructose-6-phosphate. This is Glucose-6-phosphate isomerase from Clostridium botulinum (strain Loch Maree / Type A3).